The primary structure comprises 170 residues: Ankyrin repeat-containing protein C105.02c (170 aa).

ANK repeat units follow at residues 46–76 (LGNDCVHVCTKYGSLECLDWLLDISGVNLNN) and 81–116 (TGDTPLHFAVMFIKKDQETALRMVEMLMEVGADPLL). Residues 150-170 (SADVVADDDDEEEGSGESDEE) form a disordered region. Residues 154-170 (VADDDDEEEGSGESDEE) show a composition bias toward acidic residues.

The protein resides in the cytoplasm. It is found in the nucleus. In Schizosaccharomyces pombe (strain 972 / ATCC 24843) (Fission yeast), this protein is Ankyrin repeat-containing protein C105.02c.